A 343-amino-acid polypeptide reads, in one-letter code: MKIKALSKLKPEEGIWMTEVEKPEMGHNDILIRIKKTAICGTDVHIYNWDEWSQKTIPVPMVVGHEYVGEVVGIGQEVRGFEIGDRVSGEGHITCGHCRNCRGGRTHLCRNTTGVGVNRTGAFSEFLVIPAFNAFKIPAGISDDLASIFDPFGNAVHTALSFDLVGEDVLITGAGPIGIMAAAVAKHVGARHVVITDVNEFRLDLARKMGVTRAVNVMNEKLEDVMSDLGMTEGFDVGLEMSGNPSAFNSMLTNMNHGGKISLLGIPPSDMAVDWNQVIFKGLVIKGIYGREMFETWYKMASLIQSGLDLTPIITHHYKIDDFQAGFDMMRSGMSGKVILDWE.

Cysteine 40 serves as a coordination point for Zn(2+). Residues threonine 42 and histidine 45 each act as charge relay system in the active site. Zn(2+) is bound by residues histidine 65, glutamate 66, cysteine 95, cysteine 98, cysteine 101, and cysteine 109. NAD(+) is bound by residues isoleucine 177, aspartate 197, arginine 202, 264–266 (LGI), and 288–289 (IY).

The protein belongs to the zinc-containing alcohol dehydrogenase family. In terms of assembly, homotetramer. The cofactor is Zn(2+).

Its subcellular location is the cytoplasm. It carries out the reaction L-threonine + NAD(+) = (2S)-2-amino-3-oxobutanoate + NADH + H(+). It participates in amino-acid degradation; L-threonine degradation via oxydo-reductase pathway; glycine from L-threonine: step 1/2. In terms of biological role, catalyzes the NAD(+)-dependent oxidation of L-threonine to 2-amino-3-ketobutyrate. In Aliivibrio salmonicida (strain LFI1238) (Vibrio salmonicida (strain LFI1238)), this protein is L-threonine 3-dehydrogenase.